The following is a 433-amino-acid chain: Peptidoglycan DD-endopeptidase ShyC (433 aa).

The chain crosses the membrane as a helical span at residues 10–30 (WLHRVLITAFSAIIVFAIFFL). The Zn(2+) site is built by histidine 299, aspartate 303, and histidine 380.

Belongs to the peptidase M23B family. Requires Zn(2+) as cofactor.

Its subcellular location is the cell inner membrane. It functions in the pathway cell wall degradation; peptidoglycan degradation. Reduced activity in 0.5 mM EDTA and a complete loss of activity at higher EDTA concentrations. Functionally, cell wall peptidoglycan (PG) DD-endopeptidase. Hydrolyzes peptide cross-links which covalently connect adjacent PG strands probably to allow insertion of new glycans and thus cell wall expansion. Degrades purified whole PG sacculi in vitro. This Vibrio cholerae serotype O1 (strain ATCC 39315 / El Tor Inaba N16961) protein is Peptidoglycan DD-endopeptidase ShyC.